Reading from the N-terminus, the 444-residue chain is N-succinylarginine dihydrolase (444 aa).

Residues 19–28, Asn110, and 137–138 each bind substrate; these read AGLSFGNVAS and HR. Glu174 is an active-site residue. Position 214 (Arg214) interacts with substrate. His250 is an active-site residue. Substrate contacts are provided by Asp252 and Asn362. Cys368 (nucleophile) is an active-site residue.

It belongs to the succinylarginine dihydrolase family. As to quaternary structure, homodimer.

The enzyme catalyses N(2)-succinyl-L-arginine + 2 H2O + 2 H(+) = N(2)-succinyl-L-ornithine + 2 NH4(+) + CO2. It functions in the pathway amino-acid degradation; L-arginine degradation via AST pathway; L-glutamate and succinate from L-arginine: step 2/5. Catalyzes the hydrolysis of N(2)-succinylarginine into N(2)-succinylornithine, ammonia and CO(2). The polypeptide is N-succinylarginine dihydrolase (Shewanella oneidensis (strain ATCC 700550 / JCM 31522 / CIP 106686 / LMG 19005 / NCIMB 14063 / MR-1)).